Here is a 116-residue protein sequence, read N- to C-terminus: Prefoldin subunit beta (116 aa).

The protein belongs to the prefoldin subunit beta family. Heterohexamer of two alpha and four beta subunits.

The protein resides in the cytoplasm. Molecular chaperone capable of stabilizing a range of proteins. Seems to fulfill an ATP-independent, HSP70-like function in archaeal de novo protein folding. The protein is Prefoldin subunit beta of Thermococcus onnurineus (strain NA1).